The chain runs to 303 residues: DCN1-like protein 3 (303 aa).

The tract at residues 1 to 40 is disordered; that stretch reads MGQCVTKCKNPSSTLGSKNGERESSKPHKRSSSHKEEHMS. Glycine 2 is lipidated: N-myristoyl glycine. Positions 85–277 constitute a DCUN1 domain; sequence SSLQRIEELF…LFDTFVEWEM (193 aa).

In terms of assembly, may interact (via the DCUN1 domain) with unneddylated cullins.

It is found in the cell membrane. The protein localises to the cytoplasm. Its subcellular location is the nucleus. The protein resides in the perinuclear region. Contributes to the neddylation of all cullins by transferring NEDD8 from N-terminally acetylated NEDD8-conjugating E2s enzyme to different cullin C-terminal domain-RBX complexes. At the cell membrane, can promote and as well inhibit cullins neddylation. The chain is DCN1-like protein 3 from Xenopus laevis (African clawed frog).